The primary structure comprises 376 residues: Lipid-A-disaccharide synthase (376 aa).

Belongs to the LpxB family.

It catalyses the reaction a lipid X + a UDP-2-N,3-O-bis[(3R)-3-hydroxyacyl]-alpha-D-glucosamine = a lipid A disaccharide + UDP + H(+). It functions in the pathway bacterial outer membrane biogenesis; LPS lipid A biosynthesis. Its function is as follows. Condensation of UDP-2,3-diacylglucosamine and 2,3-diacylglucosamine-1-phosphate to form lipid A disaccharide, a precursor of lipid A, a phosphorylated glycolipid that anchors the lipopolysaccharide to the outer membrane of the cell. This chain is Lipid-A-disaccharide synthase, found in Coxiella burnetii (strain CbuG_Q212) (Coxiella burnetii (strain Q212)).